Here is an 84-residue protein sequence, read N- to C-terminus: Small ribosomal subunit protein uS17 (84 aa).

Belongs to the universal ribosomal protein uS17 family. Part of the 30S ribosomal subunit.

One of the primary rRNA binding proteins, it binds specifically to the 5'-end of 16S ribosomal RNA. The protein is Small ribosomal subunit protein uS17 of Borrelia recurrentis (strain A1).